We begin with the raw amino-acid sequence, 181 residues long: HGPRTase-like protein 1 (181 aa).

The protein belongs to the purine/pyrimidine phosphoribosyltransferase family. Archaeal HPRT subfamily.

Functionally, may catalyze a purine salvage reaction, the substrate is unknown. The sequence is that of HGPRTase-like protein 1 from Halalkalicoccus jeotgali (strain DSM 18796 / CECT 7217 / JCM 14584 / KCTC 4019 / B3).